A 285-amino-acid polypeptide reads, in one-letter code: Urease accessory protein UreD (285 aa).

The protein belongs to the UreD family. In terms of assembly, ureD, UreF and UreG form a complex that acts as a GTP-hydrolysis-dependent molecular chaperone, activating the urease apoprotein by helping to assemble the nickel containing metallocenter of UreC. The UreE protein probably delivers the nickel.

The protein resides in the cytoplasm. Functionally, required for maturation of urease via the functional incorporation of the urease nickel metallocenter. This chain is Urease accessory protein UreD, found in Cytophaga hutchinsonii (strain ATCC 33406 / DSM 1761 / CIP 103989 / NBRC 15051 / NCIMB 9469 / D465).